We begin with the raw amino-acid sequence, 182 residues long: MLVLVLGDLHIPHRCNSLPAKFKKLLVPGKIQHILCTGNLCTKESYDYLKTLAGDVHIVRGDFDENLNYPEQKVVTVGQFKIGLIHGHQVIPWGDMASLALLQRQFDVDILISGHTHKFEAFEHENKFYINPGSATGAYNALEANIIPSFVLMDIQASTVVTYVYQLIGDDVKVERIEYKKS.

The residue at position 50 (lysine 50) is an N6-acetyllysine.

Belongs to the VPS29 family. As to quaternary structure, component of the commander complex consisting of the CCC subcomplex and the retriever subcomplex. Component of the heterotrimeric retriever complex formed by VPS26C, VPS29 and VPS35L; within the complex interacts with VPS35L. Component of the heterotrimeric retromer cargo-selective complex (CSC), also described as vacuolar protein sorting subcomplex (VPS), formed by VPS26 (VPS26A or VPS26B), VPS29 and VPS35. The CSC has a highly elongated structure with VPS26 and VPS29 binding independently at opposite distal ends of VPS35 as central platform. The CSC is believed to associate with variable sorting nexins to form functionally distinct retromer complex variants. The originally described retromer complex (also called SNX-BAR retromer) is a pentamer containing the CSC and a heterodimeric membrane-deforming subcomplex formed between SNX1 or SNX2 and SNX5 or SNX6 (also called SNX-BAR subcomplex); the respective CSC and SNX-BAR subcomplexes associate with low affinity. The CSC associates with SNX3 to form a SNX3-retromer complex. The CSC associates with SNX27, the WASH complex and the SNX-BAR subcomplex to form the SNX27-retromer complex. Interacts with VPS26A, VPS35, SNX1, SNX2, SNX3, SNX27, WASHC5. Interacts with TBC1D5; this interaction is blocked by VPS35L in the retriever complex. Interacts with SNX17; the interaction is indirect; SNX17 (via its C-terminus) interacts with the retriever complex (via VPS26C and VPS35L). Interacts with VPS26B and ANKRD27.

The protein resides in the cytoplasm. It is found in the membrane. Its subcellular location is the endosome membrane. The protein localises to the early endosome. It localises to the late endosome. Its function is as follows. Component of the commander complex that is essential for endosomal recycling of transmembrane cargos; the commander complex is composed of the CCC subcomplex and the retriever subcomplex. Component of the retriever complex, which is a heterotrimeric complex related to retromer cargo-selective complex (CSC) and essential for retromer-independent retrieval and recycling of numerous cargos such as integrin alpha-5/beta-1 (ITGA5:ITGB1). Component of the retromer cargo-selective complex (CSC). The CSC is believed to be the core functional component of retromer or respective retromer complex variants acting to prevent missorting of selected transmembrane cargo proteins into the lysosomal degradation pathway. The recruitment of the CSC to the endosomal membrane involves RAB7A and SNX3. The SNX-BAR retromer mediates retrograde transport of cargo proteins from endosomes to the trans-Golgi network (TGN) and is involved in endosome-to-plasma membrane transport for cargo protein recycling. The SNX3-retromer mediates the retrograde endosome-to-TGN transport of WLS distinct from the SNX-BAR retromer pathway. The SNX27-retromer is believed to be involved in endosome-to-plasma membrane trafficking and recycling of a broad spectrum of cargo proteins. The CSC seems to act as recruitment hub for other proteins, such as the WASH complex and TBC1D5. Required to regulate transcytosis of the polymeric immunoglobulin receptor (pIgR-pIgA). In the endosomes, retriever complex drives the retrieval and recycling of NxxY-motif-containing cargo proteins by coupling to SNX17, a cargo essential for the homeostatic maintenance of numerous cell surface proteins associated with processes that include cell migration, cell adhesion, nutrient supply and cell signaling. The recruitment of the retriever complex to the endosomal membrane involves CCC and WASH complexes. Involved in GLUT1 endosome-to-plasma membrane trafficking; the function is dependent of association with ANKRD27. This is Vacuolar protein sorting-associated protein 29 (VPS29) from Pongo abelii (Sumatran orangutan).